The sequence spans 305 residues: tRNA uridine(34) hydroxylase (305 aa).

The Rhodanese domain occupies 125–219; the sequence is ADENTVVVDT…YLEEVPREQS (95 aa). Cys179 (cysteine persulfide intermediate) is an active-site residue.

It belongs to the TrhO family.

It catalyses the reaction uridine(34) in tRNA + AH2 + O2 = 5-hydroxyuridine(34) in tRNA + A + H2O. Functionally, catalyzes oxygen-dependent 5-hydroxyuridine (ho5U) modification at position 34 in tRNAs. The chain is tRNA uridine(34) hydroxylase from Brucella canis (strain ATCC 23365 / NCTC 10854 / RM-666).